A 465-amino-acid chain; its full sequence is Phenylalanine--tRNA ligase alpha subunit (465 aa).

Residues Thr309, 348-350 (QLD), and Phe388 each bind L-phenylalanine. Glu390 is a binding site for Mg(2+).

Belongs to the class-II aminoacyl-tRNA synthetase family. Phe-tRNA synthetase alpha subunit type 2 subfamily. As to quaternary structure, tetramer of two alpha and two beta subunits. Requires Mg(2+) as cofactor.

The protein resides in the cytoplasm. It carries out the reaction tRNA(Phe) + L-phenylalanine + ATP = L-phenylalanyl-tRNA(Phe) + AMP + diphosphate + H(+). This is Phenylalanine--tRNA ligase alpha subunit from Sulfolobus acidocaldarius (strain ATCC 33909 / DSM 639 / JCM 8929 / NBRC 15157 / NCIMB 11770).